A 458-amino-acid polypeptide reads, in one-letter code: MSQSSASSIFTVSRLNQTVRELLEREMGQIWLTAEISNFSQPASGHWYFTLKDDRAQVRCAMFRNSNRRTTFRPQNGQQVLVRASITLYEPRGDYQLIAESMQPAGDGLLQQQFEQLKQQLAAEGLFDQSHKQPLPRPAKQVGVITSASGAALHDVLHVLQRRDPSLPVIIYPTSVQGVDAPLQIVRAIQLANLRAECDVLIVGRGGGSLEDLWSFNDERVARAIFNSHIPIVSAVGHETDVTIADFVADLRAPTPSAAAELVSRNQIELVRQIQGQQQRMEMAMDYYLAQRNQQFTRLEHRLQQQHPHLRLARQQTLLLKLQRRLEESAQTQIRLLSKRTERLQQRLQQVQPQGQIHRYNQRVQQQEYRLRQAVERQLNGYRQRFGIACSQLEAVSPLATLARGYSVTQTPAGALLKTTKQVQAGDKLTTRLQDGWVESEITQVTVAKKSRQKKVVT.

The protein belongs to the XseA family. As to quaternary structure, heterooligomer composed of large and small subunits.

Its subcellular location is the cytoplasm. The enzyme catalyses Exonucleolytic cleavage in either 5'- to 3'- or 3'- to 5'-direction to yield nucleoside 5'-phosphates.. Functionally, bidirectionally degrades single-stranded DNA into large acid-insoluble oligonucleotides, which are then degraded further into small acid-soluble oligonucleotides. In Yersinia pseudotuberculosis serotype O:1b (strain IP 31758), this protein is Exodeoxyribonuclease 7 large subunit.